We begin with the raw amino-acid sequence, 230 residues long: UPF0173 metal-dependent hydrolase Mbar_A3716 (230 aa).

The protein belongs to the UPF0173 family.

The protein is UPF0173 metal-dependent hydrolase Mbar_A3716 of Methanosarcina barkeri (strain Fusaro / DSM 804).